A 357-amino-acid polypeptide reads, in one-letter code: MKGKFLKVSSLFVATLTTATLVSSPAANALSSKAMDNHPQQTQTDKQQTPKIQKGGNLKPLEQRERANVILPNNDRHQITDTTNGHYAPVTYIQVEAPTGTFIASGVVVGKDTLLTNKHIVDATHGDPHALKAFASAINQDNYPNGGFTAEQITKYSGEGDLAIVKFSPNEQNKHIGEVVKPATMSNNAETQVNQNITVTGYPGDKPVATMWESKGKITYLKGEAMQYDLSTTGGNSGSPVFNEKNEVIGIHWGGVPNQFNGAVFINENVRNFLKQNIEDINFANDDHPNNPDNPDNPNNPDNPNNPDNPNNPDNPDNPNNPDNPNNPDNPNNPDQPNNPNNPDNGDNNNSDNPDAA.

Residues 1–29 (MKGKFLKVSSLFVATLTTATLVSSPAANA) form the signal peptide. Positions 30 to 68 (LSSKAMDNHPQQTQTDKQQTPKIQKGGNLKPLEQRERAN) are excised as a propeptide. The interval 33 to 58 (KAMDNHPQQTQTDKQQTPKIQKGGNL) is disordered. The span at 40 to 54 (QQTQTDKQQTPKIQK) shows a compositional bias: low complexity. Catalysis depends on charge relay system residues His-119, Asp-161, and Ser-237. The tract at residues 282 to 357 (NFANDDHPNN…NNNSDNPDAA (76 aa)) is disordered. 18 repeat units span residues 289-291 (PNN), 292-294 (PDN), 295-297 (PDN), 298-300 (PNN), 301-303 (PDN), 304-306 (PNN), 307-309 (PDN), 310-312 (PNN), 313-315 (PDN), 316-318 (PDN), 319-321 (PNN), 322-324 (PDN), 325-327 (PNN), 328-330 (PDN), 331-333 (PNN), 337-339 (PNN), 340-342 (PNN), and 343-345 (PDN). The 18 X 3 AA repeats of P-[DN]-N stretch occupies residues 289–345 (PNNPDNPDNPNNPDNPNNPDNPNNPDNPDNPNNPDNPNNPDNPNNPDQPNNPNNPDN). Low complexity predominate over residues 291–357 (NPDNPDNPNN…NNNSDNPDAA (67 aa)).

Belongs to the peptidase S1B family. Proteolytically cleaved by aureolysin (aur). This cleavage leads to the activation of SspA.

Its subcellular location is the secreted. The enzyme catalyses Preferential cleavage: Glu-|-Xaa, Asp-|-Xaa.. In terms of biological role, preferentially cleaves peptide bonds on the carboxyl-terminal side of aspartate and glutamate. Along with other extracellular proteases it is involved in colonization and infection of human tissues. Required for proteolytic maturation of thiol protease SspB and inactivation of SspC, an inhibitor of SspB. It is the most important protease for degradation of fibronectin-binding protein (FnBP) and surface protein A, which are involved in adherence to host cells. May also protect bacteria against host defense mechanism by cleaving the immunoglobulin classes IgG, IgA and IgM. May be involved in the stability of secreted lipases. This is Glutamyl endopeptidase (sspA) from Staphylococcus aureus (strain MRSA252).